Consider the following 583-residue polypeptide: Membrane-bound O-acyltransferase gup1 (583 aa).

Over 1–52 the chain is Extracellular; it reads MLRLFRFDVLETSTKDTERPNSKSSRLSSTSGSSHPSSSSRLTVRSAVPEKS. The tract at residues 15-42 is disordered; it reads KDTERPNSKSSRLSSTSGSSHPSSSSRL. Positions 22 to 40 are enriched in low complexity; the sequence is SKSSRLSSTSGSSHPSSSS. The helical transmembrane segment at 53-73 threads the bilayer; the sequence is AFGSIEFIFYFSVILSILTIA. The Cytoplasmic segment spans residues 74–119; that stretch reads CFKIHYVSSPKHPNYKNIEKYLKPGWLFGQKVDSADFQYSAFRENM. Residues 120 to 140 traverse the membrane as a helical segment; sequence PILLLVIIVYNFLWRLVKLVF. The Extracellular portion of the chain corresponds to 141 to 159; the sequence is TKNTNDELAIKNNYRLCFS. Residues 160 to 180 form a helical membrane-spanning segment; it reads LLFALLVYGTGVIYVLTIALI. Residues 181–191 are Cytoplasmic-facing; that stretch reads NYLISKSLKNS. Residues 192 to 212 form a helical membrane-spanning segment; it reads IFNPLLTWTLDISVVFFKEYF. Topologically, residues 213-298 are extracellular; the sequence is AYCKFSSLHP…SCLDEDYNLK (86 aa). The helical transmembrane segment at 299-319 threads the bilayer; that stretch reads NFLTYIFYAPLYLAGPIISFN. Topologically, residues 320–343 are cytoplasmic; that stretch reads NFMSQMKYPTVSTLKYRNLLYAIR. The helical transmembrane segment at 344-364 threads the bilayer; it reads FLVCVLTMEFLLHYAYVTAIS. The Extracellular segment spans residues 365 to 373; the sequence is KDGNWNQYS. Residues 374-394 form a helical membrane-spanning segment; sequence AVESAMISFIVLFMTWLKLLI. Residues 395 to 444 lie on the Cytoplasmic side of the membrane; sequence PWRLFRLWSLIDDIEPPENIVRCMCNNYSAVGFWRAWHRSFNRWLIRYIY. 2 helical membrane passes run 445–465 and 466–486; these read VPLG…TFVA and LWHD…LFIL. Residue His468 is part of the active site. The Cytoplasmic segment spans residues 487-512; that stretch reads PERLCCFMSRRTGLTKHPYYRYISGF. Residues 513 to 533 traverse the membrane as a helical segment; the sequence is GAALNIYFMIICNLIGFAVGI. Residues 534–549 lie on the Extracellular side of the membrane; sequence DGIKNVLVSFFLTLKG. Residues 550 to 570 form a helical membrane-spanning segment; sequence AMSAIAAFIMFFSAVQIMFQI. The Cytoplasmic portion of the chain corresponds to 571 to 583; sequence RVNEEEEGINLRC.

The protein belongs to the membrane-bound acyltransferase family.

The protein resides in the cell membrane. Its subcellular location is the endoplasmic reticulum membrane. The protein localises to the mitochondrion membrane. In terms of biological role, membrane-bound O-acyltransferase involved in the remodeling of glycosylphosphatidylinositol (GPI) anchors. Acts only on GPI-anchored proteins, but not on free GPI lipids. Also involved in lipid metabolism, having profound effects on sphingolipid-sterol-ordered domains integrity and assembly. Involved in cell integrity and apoptosis. This chain is Membrane-bound O-acyltransferase gup1 (gup1), found in Schizosaccharomyces pombe (strain 972 / ATCC 24843) (Fission yeast).